The following is a 365-amino-acid chain: Aminomethyltransferase (365 aa).

Belongs to the GcvT family. In terms of assembly, the glycine cleavage system is composed of four proteins: P, T, L and H.

The catalysed reaction is N(6)-[(R)-S(8)-aminomethyldihydrolipoyl]-L-lysyl-[protein] + (6S)-5,6,7,8-tetrahydrofolate = N(6)-[(R)-dihydrolipoyl]-L-lysyl-[protein] + (6R)-5,10-methylene-5,6,7,8-tetrahydrofolate + NH4(+). In terms of biological role, the glycine cleavage system catalyzes the degradation of glycine. This Chlorobium luteolum (strain DSM 273 / BCRC 81028 / 2530) (Pelodictyon luteolum) protein is Aminomethyltransferase.